Consider the following 620-residue polypeptide: 1-deoxy-D-xylulose-5-phosphate synthase (620 aa).

Residues His-80 and 121-123 contribute to the thiamine diphosphate site; that span reads GHS. Mg(2+) is bound at residue Asp-152. Thiamine diphosphate contacts are provided by residues 153–154, Asn-181, Tyr-288, and Glu-370; that span reads GA. A Mg(2+)-binding site is contributed by Asn-181.

The protein belongs to the transketolase family. DXPS subfamily. As to quaternary structure, homodimer. The cofactor is Mg(2+). Thiamine diphosphate is required as a cofactor.

The enzyme catalyses D-glyceraldehyde 3-phosphate + pyruvate + H(+) = 1-deoxy-D-xylulose 5-phosphate + CO2. Its pathway is metabolic intermediate biosynthesis; 1-deoxy-D-xylulose 5-phosphate biosynthesis; 1-deoxy-D-xylulose 5-phosphate from D-glyceraldehyde 3-phosphate and pyruvate: step 1/1. Its function is as follows. Catalyzes the acyloin condensation reaction between C atoms 2 and 3 of pyruvate and glyceraldehyde 3-phosphate to yield 1-deoxy-D-xylulose-5-phosphate (DXP). The protein is 1-deoxy-D-xylulose-5-phosphate synthase of Enterobacter sp. (strain 638).